Reading from the N-terminus, the 429-residue chain is MSVWALGLNHHTAPLDLRGRFAFAIDQIEPTLRGLRASLARQPEATLLSTCNRTEIYCAGDTNDLDSTMEWLAHNGGVSPSLLRAHAYTLQDDQAARHAFRVASGLDSMVLGEPQILGQMKDAVRAAEDAGAMGTTLHQLFQRSFAVAKEVRTSTEIGAHSISMAAAAVRLAGQLFEDLGDIKVLFVGAGEMIDLAATHFAAKNPKAMAIANRSLDRGEKLASRFGAEVMRLGDLPGRLHEFDAVISCTASTLPIIGLGAVERALKRRKHRPMFMVDLAVPRDIEPEVKELSDIYLYTVDDLAHVVQTGRDSRQAAVAEAEVIIDAGVQNFMHWLDQRGSVPLIQQLNAQADAWRAAEIVRAKKLLARGESIEEVLEAMSRGLTQKMLHGAMAELHAGDASSREATARTVSKLFLRGQMPRAATERKER.

Substrate contacts are provided by residues 50–53 (TCNR), Ser108, 113–115 (EPQ), and Gln119. The active-site Nucleophile is the Cys51. 188-193 (GAGEMI) serves as a coordination point for NADP(+).

It belongs to the glutamyl-tRNA reductase family. Homodimer.

It catalyses the reaction (S)-4-amino-5-oxopentanoate + tRNA(Glu) + NADP(+) = L-glutamyl-tRNA(Glu) + NADPH + H(+). The protein operates within porphyrin-containing compound metabolism; protoporphyrin-IX biosynthesis; 5-aminolevulinate from L-glutamyl-tRNA(Glu): step 1/2. Catalyzes the NADPH-dependent reduction of glutamyl-tRNA(Glu) to glutamate 1-semialdehyde (GSA). The polypeptide is Glutamyl-tRNA reductase (Polaromonas naphthalenivorans (strain CJ2)).